Here is a 227-residue protein sequence, read N- to C-terminus: Holliday junction branch migration complex subunit RuvA (227 aa).

A domain I region spans residues 1 to 64 (MFESISGILT…EDALRLFGFS (64 aa)). The interval 65 to 143 (NVQERTLFLS…LTDAASCAQS (79 aa)) is domain II. Positions 144–158 (QTDDRAAHPSNLGCA) are flexible linker. Positions 159–227 (PHAREIEDLV…HPHAVAPAAE (69 aa)) are domain III.

Belongs to the RuvA family. Homotetramer. Forms an RuvA(8)-RuvB(12)-Holliday junction (HJ) complex. HJ DNA is sandwiched between 2 RuvA tetramers; dsDNA enters through RuvA and exits via RuvB. An RuvB hexamer assembles on each DNA strand where it exits the tetramer. Each RuvB hexamer is contacted by two RuvA subunits (via domain III) on 2 adjacent RuvB subunits; this complex drives branch migration. In the full resolvosome a probable DNA-RuvA(4)-RuvB(12)-RuvC(2) complex forms which resolves the HJ.

The protein localises to the cytoplasm. Functionally, the RuvA-RuvB-RuvC complex processes Holliday junction (HJ) DNA during genetic recombination and DNA repair, while the RuvA-RuvB complex plays an important role in the rescue of blocked DNA replication forks via replication fork reversal (RFR). RuvA specifically binds to HJ cruciform DNA, conferring on it an open structure. The RuvB hexamer acts as an ATP-dependent pump, pulling dsDNA into and through the RuvAB complex. HJ branch migration allows RuvC to scan DNA until it finds its consensus sequence, where it cleaves and resolves the cruciform DNA. This is Holliday junction branch migration complex subunit RuvA from Treponema pallidum (strain Nichols).